Reading from the N-terminus, the 511-residue chain is Cytochrome P450 77A2 (511 aa).

Cys456 contributes to the heme binding site.

It belongs to the cytochrome P450 family. Requires heme as cofactor.

This Solanum melongena (Eggplant) protein is Cytochrome P450 77A2 (CYP77A2).